We begin with the raw amino-acid sequence, 76 residues long: Omega-scoloptoxin(15)-Ssd3c (76 aa).

An N-terminal signal peptide occupies residues 1–23 (MEKKIIFLVVLVALLALPEFISS).

It belongs to the scoloptoxin-15 family. Post-translationally, contains 2 disulfide bonds. In terms of tissue distribution, expressed by the venom gland.

It localises to the secreted. Functionally, voltage-gated calcium channel inhibitor (Cav) (8.6% block at 10 nM), when tested on DRG neurons. The sequence is that of Omega-scoloptoxin(15)-Ssd3c from Scolopendra dehaani (Thai centipede).